Here is a 329-residue protein sequence, read N- to C-terminus: DNA-directed RNA polymerase subunit alpha (329 aa).

The tract at residues 1–235 is alpha N-terminal domain (alpha-NTD); that stretch reads MQNSIIGFLK…EQLEAFVDLR (235 aa). An alpha C-terminal domain (alpha-CTD) region spans residues 249–329; that stretch reads FEPILLRPVD…KWPPSSILEE (81 aa).

It belongs to the RNA polymerase alpha chain family. Homodimer. The RNAP catalytic core consists of 2 alpha, 1 beta, 1 beta' and 1 omega subunit. When a sigma factor is associated with the core the holoenzyme is formed, which can initiate transcription.

It carries out the reaction RNA(n) + a ribonucleoside 5'-triphosphate = RNA(n+1) + diphosphate. Functionally, DNA-dependent RNA polymerase catalyzes the transcription of DNA into RNA using the four ribonucleoside triphosphates as substrates. The chain is DNA-directed RNA polymerase subunit alpha from Buchnera aphidicola subsp. Schizaphis graminum (strain Sg).